A 557-amino-acid chain; its full sequence is 2-succinyl-5-enolpyruvyl-6-hydroxy-3-cyclohexene-1-carboxylate synthase (557 aa).

This sequence belongs to the TPP enzyme family. MenD subfamily. Homodimer. Requires Mg(2+) as cofactor. The cofactor is Mn(2+). It depends on thiamine diphosphate as a cofactor.

It carries out the reaction isochorismate + 2-oxoglutarate + H(+) = 5-enolpyruvoyl-6-hydroxy-2-succinyl-cyclohex-3-ene-1-carboxylate + CO2. Its pathway is quinol/quinone metabolism; 1,4-dihydroxy-2-naphthoate biosynthesis; 1,4-dihydroxy-2-naphthoate from chorismate: step 2/7. The protein operates within quinol/quinone metabolism; menaquinone biosynthesis. Its function is as follows. Catalyzes the thiamine diphosphate-dependent decarboxylation of 2-oxoglutarate and the subsequent addition of the resulting succinic semialdehyde-thiamine pyrophosphate anion to isochorismate to yield 2-succinyl-5-enolpyruvyl-6-hydroxy-3-cyclohexene-1-carboxylate (SEPHCHC). In Staphylococcus aureus (strain bovine RF122 / ET3-1), this protein is 2-succinyl-5-enolpyruvyl-6-hydroxy-3-cyclohexene-1-carboxylate synthase.